Reading from the N-terminus, the 699-residue chain is tRNA(Met) cytidine acetyltransferase TmcA (699 aa).

Residues Q179, G201 to M210, and R323 contribute to the ATP site. Positions I359–L543 constitute an N-acetyltransferase domain. Residues V471–V473, E511, and R518 contribute to the acetyl-CoA site.

Belongs to the RNA cytidine acetyltransferase family. TmcA subfamily.

The protein resides in the cytoplasm. The enzyme catalyses cytidine(34) in elongator tRNA(Met) + acetyl-CoA + ATP + H2O = N(4)-acetylcytidine(34) in elongator tRNA(Met) + ADP + phosphate + CoA + H(+). Catalyzes the formation of N(4)-acetylcytidine (ac(4)C) at the wobble position of tRNA(Met), by using acetyl-CoA as an acetyl donor and ATP (or GTP). This chain is tRNA(Met) cytidine acetyltransferase TmcA, found in Yersinia pestis (strain D106004).